The sequence spans 239 residues: Purine nucleoside phosphorylase DeoD-type (239 aa).

A purine D-ribonucleoside is bound at residue histidine 5. Phosphate is bound by residues glycine 21, arginine 25, arginine 44, and 88 to 91 (RVGS). A purine D-ribonucleoside-binding positions include 180–182 (EME) and 204–205 (SD). The active-site Proton donor is aspartate 205.

It belongs to the PNP/UDP phosphorylase family. As to quaternary structure, homohexamer; trimer of homodimers.

The enzyme catalyses a purine D-ribonucleoside + phosphate = a purine nucleobase + alpha-D-ribose 1-phosphate. It carries out the reaction a purine 2'-deoxy-D-ribonucleoside + phosphate = a purine nucleobase + 2-deoxy-alpha-D-ribose 1-phosphate. In terms of biological role, catalyzes the reversible phosphorolytic breakdown of the N-glycosidic bond in the beta-(deoxy)ribonucleoside molecules, with the formation of the corresponding free purine bases and pentose-1-phosphate. This Salmonella choleraesuis (strain SC-B67) protein is Purine nucleoside phosphorylase DeoD-type.